Reading from the N-terminus, the 996-residue chain is Sarcoplasmic/endoplasmic reticulum calcium ATPase 1 (996 aa).

At 1 to 48 the chain is on the cytoplasmic side; the sequence is MENAHTKSPAECLSYFGVNEHTGLSPDQFKKNLDKFGYNELPAEEGKS. A helical transmembrane segment spans residues 49–69; it reads IWDLIVEQFEDLLVRILLLAA. Topologically, residues 70 to 89 are lumenal; sequence CISFVLAWFEEGEETITAFV. A helical membrane pass occupies residues 90–110; sequence EPFVILLILIANAIVGVWQER. Residues 111 to 253 lie on the Cytoplasmic side of the membrane; the sequence is NAEDAIEALK…QEKTPLQAKL (143 aa). The helical transmembrane segment at 254-273 threads the bilayer; that stretch reads DEFGEQLSKVISLICVAVWA. Over 274–295 the chain is Lumenal; it reads INIGHFNDPVHGGSWIRGAVYY. Residues 296-313 form a helical membrane-spanning segment; the sequence is FKIAVALAVAAIPEGLPA. Residues V304, A305, I307, and E309 each coordinate Ca(2+). At 314 to 754 the chain is on the cytoplasmic side; the sequence is VITTCLALGT…EEGRAIYNNM (441 aa). D351 serves as the catalytic 4-aspartylphosphate intermediate. 2 residues coordinate Mg(2+): D351 and T353. ATP is bound by residues T353, E442, R489, K512, R557, T622, G623, D624, R675, and K681. Position 700 (D700) interacts with Mg(2+). ATP is bound at residue N703. The chain crosses the membrane as a helical span at residues 755–774; that stretch reads KQFIRYLISSNVGEVVCIFL. Ca(2+) is bound by residues N765 and E768. The Lumenal segment spans residues 775–784; it reads TAALGLPEAL. A helical membrane pass occupies residues 785–805; the sequence is IPVQLLWVNLVTDGLPATALG. Residues 785-805 are interaction with PLN; that stretch reads IPVQLLWVNLVTDGLPATALG. Residues N793, T796, and D797 each coordinate Ca(2+). Topologically, residues 806–825 are cytoplasmic; it reads FNPPDLDIMGKPPRSPKEPL. Residues 826-848 form a helical membrane-spanning segment; it reads ISGWLFFRYMAIGGYVGAATVGG. The Lumenal portion of the chain corresponds to 849–894; the sequence is AAWWFLYDSTGPAVTYYQLSHFMQCHNHNEDFTGVDCDIFEASPPM. C873 and C885 are disulfide-bonded. A helical transmembrane segment spans residues 895–914; sequence TMALSVLVTIEMCNALNSLS. E905 contacts Ca(2+). Residues 915–927 are Cytoplasmic-facing; sequence ENQSLIRMPPWSN. Residues 928 to 946 form a helical membrane-spanning segment; it reads LWLMAAMTLSMSLHFMIIY. The interval 929–940 is interaction with PLN; sequence WLMAAMTLSMSL. Over 947–961 the chain is Lumenal; that stretch reads VDPLPMIFKLTHLTF. A helical membrane pass occupies residues 962–982; the sequence is DQWLMVFKLSFPVILIDEVLK. The Cytoplasmic segment spans residues 983–996; sequence FFARNYIETGKEVK.

Belongs to the cation transport ATPase (P-type) (TC 3.A.3) family. Type IIA subfamily. In terms of assembly, interacts with sarcolipin (SLN). Interacts with phospholamban (PLN). Interacts with myoregulin (MRLN). Interacts with DWORF. Mg(2+) serves as cofactor.

It is found in the endoplasmic reticulum membrane. The protein localises to the sarcoplasmic reticulum membrane. It carries out the reaction Ca(2+)(in) + ATP + H2O = Ca(2+)(out) + ADP + phosphate + H(+). Its activity is regulated as follows. Inhibited by sarcolipin (SLN) and myoregulin (MRLN). Also shown to be inhibited by phospholamban (PLN) in vitro. Enhanced by DWORF; DWORF increases activity by displacing sarcolipin (SLN), phospholamban (PLN) and myoregulin (MRLN). In terms of biological role, key regulator of striated muscle performance by acting as the major Ca(2+) ATPase responsible for the reuptake of cytosolic Ca(2+) into the sarcoplasmic reticulum. Catalyzes the hydrolysis of ATP coupled with the translocation of calcium from the cytosol to the sarcoplasmic reticulum lumen. Contributes to calcium sequestration involved in muscular excitation/contraction. This is Sarcoplasmic/endoplasmic reticulum calcium ATPase 1 (atp2a1) from Makaira nigricans (Atlantic blue marlin).